We begin with the raw amino-acid sequence, 233 residues long: Clathrin light chain (233 aa).

The tract at residues 1–124 (MSEKFPPLED…EDRSEVVDQW (124 aa)) is disordered. Over residues 17–43 (PNDKKDDDTDFLKREAEILGDEFKTEQ) the composition is skewed to basic and acidic residues. At Thr-49 the chain carries Phosphothreonine. Ser-52 bears the Phosphoserine mark. The span at 56 to 67 (DDDEIRDFEEQF) shows a compositional bias: acidic residues. The span at 69 to 92 (DINSANGAVSSDQNGSATVSSGND) shows a compositional bias: polar residues. Basic and acidic residues predominate over residues 112–124 (SVKEDRSEVVDQW). A coiled-coil region spans residues 125-186 (KQRRAVEIHE…EAFLKKRDEF (62 aa)). Positions 144 to 204 (KELQDEAIKH…DRALQLINQD (61 aa)) are involved in binding clathrin heavy chain.

It belongs to the clathrin light chain family. Clathrin coats are formed from molecules containing 3 heavy chains and 3 light chains. Interacts with the auxilin-like clathrin uncoating factor SWA2.

It localises to the cytoplasmic vesicle membrane. Its subcellular location is the membrane. It is found in the coated pit. Its function is as follows. Clathrin is the major protein of the polyhedral coat of coated pits and vesicles. In yeast, it is involved in the retention of proteins in an intracellular membrane compartment, presumably the trans-Golgi. The yeast light chain is important for cell growth. The light chain may help to properly orient the assembly/ disassembly of the clathrin coats. This is Clathrin light chain (CLC1) from Saccharomyces cerevisiae (strain ATCC 204508 / S288c) (Baker's yeast).